The primary structure comprises 493 residues: Cytochrome P450 2E1 (493 aa).

298 to 303 (FAGTET) provides a ligand contact to substrate. Residue Cys437 participates in heme binding.

This sequence belongs to the cytochrome P450 family. In terms of assembly, interacts with chaperones HSP70 and HSP90; this interaction is required for initial targeting to mitochondria. Heme serves as cofactor. As to expression, highest level in the liver and to a lesser extent in the kidney, with a higher level in the male kidney than in the female.

The protein resides in the endoplasmic reticulum membrane. The protein localises to the microsome membrane. It is found in the mitochondrion inner membrane. It carries out the reaction an organic molecule + reduced [NADPH--hemoprotein reductase] + O2 = an alcohol + oxidized [NADPH--hemoprotein reductase] + H2O + H(+). The catalysed reaction is (5Z,8Z,11Z)-eicosatrienoate + reduced [NADPH--hemoprotein reductase] + O2 = 19-hydroxy-(5Z,8Z,11Z)-eicosatrienoate + oxidized [NADPH--hemoprotein reductase] + H2O + H(+). It catalyses the reaction (5Z,8Z,11Z,14Z,17Z)-eicosapentaenoate + reduced [NADPH--hemoprotein reductase] + O2 = 19-hydroxy-(5Z,8Z,11Z,14Z,17Z)-eicosapentaenoate + oxidized [NADPH--hemoprotein reductase] + H2O + H(+). The enzyme catalyses (4Z,7Z,10Z,13Z,16Z,19Z)-docosahexaenoate + reduced [NADPH--hemoprotein reductase] + O2 = 21-hydroxy-(4Z,7Z,10Z,13Z,16Z,19Z)-docosahexaenoate + oxidized [NADPH--hemoprotein reductase] + H2O + H(+). It carries out the reaction dodecanoate + reduced [NADPH--hemoprotein reductase] + O2 = 11-hydroxydodecanoate + oxidized [NADPH--hemoprotein reductase] + H2O + H(+). The catalysed reaction is tetradecanoate + reduced [NADPH--hemoprotein reductase] + O2 = 13-hydroxytetradecanoate + oxidized [NADPH--hemoprotein reductase] + H2O + H(+). It catalyses the reaction 4-nitrophenol + NADPH + O2 + H(+) = 4-nitrocatechol + NADP(+) + H2O. Its pathway is lipid metabolism; fatty acid metabolism. The omega-1 hydroxylase activity is stimulated by cytochrome b5. Functionally, a cytochrome P450 monooxygenase involved in the metabolism of fatty acids. Mechanistically, uses molecular oxygen inserting one oxygen atom into a substrate, and reducing the second into a water molecule, with two electrons provided by NADPH via cytochrome P450 reductase (NADPH--hemoprotein reductase). Catalyzes the hydroxylation of carbon-hydrogen bonds. Hydroxylates fatty acids specifically at the omega-1 position displaying the highest catalytic activity for saturated fatty acids. May be involved in the oxidative metabolism of xenobiotics. The sequence is that of Cytochrome P450 2E1 (Cyp2e1) from Mus musculus (Mouse).